The sequence spans 189 residues: Peptidyl-tRNA hydrolase (189 aa).

Position 16 (Tyr-16) interacts with tRNA. The Proton acceptor role is filled by His-21. Residues Phe-67, Asn-69, and Asn-115 each coordinate tRNA.

It belongs to the PTH family. Monomer.

Its subcellular location is the cytoplasm. It catalyses the reaction an N-acyl-L-alpha-aminoacyl-tRNA + H2O = an N-acyl-L-amino acid + a tRNA + H(+). Its function is as follows. Hydrolyzes ribosome-free peptidyl-tRNAs (with 1 or more amino acids incorporated), which drop off the ribosome during protein synthesis, or as a result of ribosome stalling. Functionally, catalyzes the release of premature peptidyl moieties from peptidyl-tRNA molecules trapped in stalled 50S ribosomal subunits, and thus maintains levels of free tRNAs and 50S ribosomes. This Legionella pneumophila (strain Lens) protein is Peptidyl-tRNA hydrolase.